The sequence spans 256 residues: 5-oxoprolinase subunit A 3 (256 aa).

This sequence belongs to the LamB/PxpA family. As to quaternary structure, forms a complex composed of PxpA, PxpB and PxpC.

It catalyses the reaction 5-oxo-L-proline + ATP + 2 H2O = L-glutamate + ADP + phosphate + H(+). Its function is as follows. Catalyzes the cleavage of 5-oxoproline to form L-glutamate coupled to the hydrolysis of ATP to ADP and inorganic phosphate. In Pseudomonas syringae pv. tomato (strain ATCC BAA-871 / DC3000), this protein is 5-oxoprolinase subunit A 3.